The following is a 446-amino-acid chain: Adenylosuccinate synthetase 1 (446 aa).

GTP-binding positions include 20 to 26 (GDEGKGK) and 48 to 50 (GHT). The active-site Proton acceptor is the aspartate 21. 2 residues coordinate Mg(2+): aspartate 21 and glycine 48. IMP is bound by residues 21-24 (DEGK), 46-49 (NAGH), threonine 137, arginine 151, glutamine 232, threonine 247, and arginine 319. The active-site Proton donor is the histidine 49. 315 to 321 (SVTGRPR) is a binding site for substrate. GTP is bound by residues arginine 321, 347–349 (KLD), and 429–431 (STG).

It belongs to the adenylosuccinate synthetase family. Homodimer. Mg(2+) serves as cofactor.

It is found in the cytoplasm. It carries out the reaction IMP + L-aspartate + GTP = N(6)-(1,2-dicarboxyethyl)-AMP + GDP + phosphate + 2 H(+). Its pathway is purine metabolism; AMP biosynthesis via de novo pathway; AMP from IMP: step 1/2. Its function is as follows. Plays an important role in the de novo pathway of purine nucleotide biosynthesis. Catalyzes the first committed step in the biosynthesis of AMP from IMP. The protein is Adenylosuccinate synthetase 1 of Cupriavidus pinatubonensis (strain JMP 134 / LMG 1197) (Cupriavidus necator (strain JMP 134)).